We begin with the raw amino-acid sequence, 199 residues long: Recombination protein RecR (199 aa).

A C4-type zinc finger spans residues C57–C72. The Toprim domain occupies S80 to A176.

It belongs to the RecR family.

In terms of biological role, may play a role in DNA repair. It seems to be involved in an RecBC-independent recombinational process of DNA repair. It may act with RecF and RecO. The protein is Recombination protein RecR of Lactobacillus johnsonii (strain CNCM I-12250 / La1 / NCC 533).